The following is a 222-amino-acid chain: Eukaryotic translation initiation factor 3 subunit K (222 aa).

The 163-residue stretch at 46 to 208 folds into the PCI domain; that stretch reads YDLEANLAVL…KIKTKNITEK (163 aa).

The protein belongs to the eIF-3 subunit K family. Component of the eukaryotic translation initiation factor 3 (eIF-3) complex. The eIF-3 complex interacts with pix.

It localises to the cytoplasm. Its function is as follows. Component of the eukaryotic translation initiation factor 3 (eIF-3) complex, which is involved in protein synthesis of a specialized repertoire of mRNAs and, together with other initiation factors, stimulates binding of mRNA and methionyl-tRNAi to the 40S ribosome. The eIF-3 complex specifically targets and initiates translation of a subset of mRNAs involved in cell proliferation. The sequence is that of Eukaryotic translation initiation factor 3 subunit K from Drosophila ananassae (Fruit fly).